The chain runs to 305 residues: MAELNVNIGNLPLKNPVMTASGTFGYGIEYADFMDISRLGGIFVKGTTIQPREGNDYPRMAETPSGMLNAVGLQNKGADYFAEHIYPKIKDINTNMIVNVSGSSVETYVECAEKIAELDRIPAIELNISCPNVKQGGMAFGVTTCGAGEVVKAVRRVYPKILIVKLSPNVTDITEIAKAVEAEGADSVSLINTMLGMAIDAEKRKPILSTITGGLSGPCVKPVALRMVWQTYHAVKIPIIGLGGISNWKDAVEFMLAGASAIQIGTYNFVDPTVSIKVIDGLNDYCDRHGFKSVKELIGALDIQR.

Residues serine 21 and 45–46 (KG) contribute to the FMN site. Residues lysine 45 and 69–73 (NAVGL) each bind substrate. FMN-binding residues include asparagine 99 and asparagine 127. Asparagine 127 lines the substrate pocket. Residue cysteine 130 is the Nucleophile of the active site. The FMN site is built by lysine 165 and isoleucine 191. Position 192–193 (192–193 (NT)) interacts with substrate. Residues glycine 217, 243–244 (GG), and 265–266 (GT) each bind FMN.

The protein belongs to the dihydroorotate dehydrogenase family. Type 1 subfamily. In terms of assembly, heterotetramer of 2 PyrK and 2 PyrD type B subunits. FMN is required as a cofactor.

The protein localises to the cytoplasm. The enzyme catalyses (S)-dihydroorotate + NAD(+) = orotate + NADH + H(+). It participates in pyrimidine metabolism; UMP biosynthesis via de novo pathway; orotate from (S)-dihydroorotate (NAD(+) route): step 1/1. Catalyzes the conversion of dihydroorotate to orotate with NAD(+) as electron acceptor. The sequence is that of Dihydroorotate dehydrogenase B (NAD(+)), catalytic subunit (pyrD) from Parabacteroides distasonis (strain ATCC 8503 / DSM 20701 / CIP 104284 / JCM 5825 / NCTC 11152).